A 180-amino-acid polypeptide reads, in one-letter code: Adenine phosphoribosyltransferase (180 aa).

An N-acetylserine modification is found at Ser-2. A phosphoserine mark is found at Ser-15 and Ser-30. At Tyr-60 the chain carries Phosphotyrosine. At Ser-66 the chain carries Phosphoserine. N6-acetyllysine is present on Lys-114. Thr-135 carries the post-translational modification Phosphothreonine.

Belongs to the purine/pyrimidine phosphoribosyltransferase family. In terms of assembly, homodimer.

The protein localises to the cytoplasm. The catalysed reaction is AMP + diphosphate = 5-phospho-alpha-D-ribose 1-diphosphate + adenine. The protein operates within purine metabolism; AMP biosynthesis via salvage pathway; AMP from adenine: step 1/1. Its function is as follows. Catalyzes a salvage reaction resulting in the formation of AMP, that is energically less costly than de novo synthesis. The polypeptide is Adenine phosphoribosyltransferase (Stochomys longicaudatus (Target rat)).